The following is a 130-amino-acid chain: Small ribosomal subunit protein uS9 (130 aa).

It belongs to the universal ribosomal protein uS9 family.

The polypeptide is Small ribosomal subunit protein uS9 (Desulfosudis oleivorans (strain DSM 6200 / JCM 39069 / Hxd3) (Desulfococcus oleovorans)).